The sequence spans 233 residues: 5'-methylthioadenosine/S-adenosylhomocysteine nucleosidase (233 aa).

Residue E12 is the Proton acceptor of the active site. Substrate is bound by residues G78, I156, and 177 to 178 (ME). The active-site Proton donor is the D201.

The protein belongs to the PNP/UDP phosphorylase family. MtnN subfamily.

It carries out the reaction S-adenosyl-L-homocysteine + H2O = S-(5-deoxy-D-ribos-5-yl)-L-homocysteine + adenine. The catalysed reaction is S-methyl-5'-thioadenosine + H2O = 5-(methylsulfanyl)-D-ribose + adenine. It catalyses the reaction 5'-deoxyadenosine + H2O = 5-deoxy-D-ribose + adenine. The protein operates within amino-acid biosynthesis; L-methionine biosynthesis via salvage pathway; S-methyl-5-thio-alpha-D-ribose 1-phosphate from S-methyl-5'-thioadenosine (hydrolase route): step 1/2. In terms of biological role, catalyzes the irreversible cleavage of the glycosidic bond in both 5'-methylthioadenosine (MTA) and S-adenosylhomocysteine (SAH/AdoHcy) to adenine and the corresponding thioribose, 5'-methylthioribose and S-ribosylhomocysteine, respectively. Also cleaves 5'-deoxyadenosine, a toxic by-product of radical S-adenosylmethionine (SAM) enzymes, into 5-deoxyribose and adenine. This Listeria welshimeri serovar 6b (strain ATCC 35897 / DSM 20650 / CCUG 15529 / CIP 8149 / NCTC 11857 / SLCC 5334 / V8) protein is 5'-methylthioadenosine/S-adenosylhomocysteine nucleosidase.